Consider the following 295-residue polypeptide: Biliverdin reductase A (295 aa).

Positions 1-2 (MS) are excised as a propeptide. NAD(+)-binding positions include 18-19 (RA), 76-79 (SSSH), and Y97. Position 154 is a phosphoserine (S154). S167 lines the NAD(+) pocket. T173 carries the post-translational modification Phosphothreonine. S177 and S229 each carry phosphoserine. An N6-acetyllysine mark is found at K247 and K252. Zn(2+) contacts are provided by H279, C280, C291, and H292.

This sequence belongs to the Gfo/Idh/MocA family. Biliverdin reductase subfamily. As to quaternary structure, monomer. It depends on Zn(2+) as a cofactor.

It is found in the cytoplasm. The protein resides in the cytosol. The enzyme catalyses (4Z,15Z)-bilirubin IXalpha + NAD(+) = biliverdin IXalpha + NADH + H(+). It catalyses the reaction (4Z,15Z)-bilirubin IXalpha + NADP(+) = biliverdin IXalpha + NADPH + H(+). It functions in the pathway porphyrin-containing compound metabolism; protoheme degradation. Reduces the gamma-methene bridge of the open tetrapyrrole, biliverdin IXalpha, to bilirubin with the concomitant oxidation of a NADH or NADPH cofactor. Does not reduce bilirubin IXbeta. Uses the reactants NADH or NADPH depending on the pH; NADH is used at the acidic pH range (6-6.9) and NADPH at the alkaline range (8.5-8.7). NADPH, however, is the probable reactant in biological systems. The sequence is that of Biliverdin reductase A from Mus musculus (Mouse).